Here is a 415-residue protein sequence, read N- to C-terminus: Serine hydroxymethyltransferase (415 aa).

(6S)-5,6,7,8-tetrahydrofolate-binding positions include leucine 119 and 123–125; that span reads GHL. Lysine 228 carries the N6-(pyridoxal phosphate)lysine modification. 353 to 355 provides a ligand contact to (6S)-5,6,7,8-tetrahydrofolate; the sequence is SPF.

Belongs to the SHMT family. As to quaternary structure, homodimer. Pyridoxal 5'-phosphate serves as cofactor.

Its subcellular location is the cytoplasm. It catalyses the reaction (6R)-5,10-methylene-5,6,7,8-tetrahydrofolate + glycine + H2O = (6S)-5,6,7,8-tetrahydrofolate + L-serine. It functions in the pathway one-carbon metabolism; tetrahydrofolate interconversion. The protein operates within amino-acid biosynthesis; glycine biosynthesis; glycine from L-serine: step 1/1. Functionally, catalyzes the reversible interconversion of serine and glycine with tetrahydrofolate (THF) serving as the one-carbon carrier. Also exhibits THF-independent aldolase activity toward beta-hydroxyamino acids, producing glycine and aldehydes, via a retro-aldol mechanism. The polypeptide is Serine hydroxymethyltransferase (Halorubrum lacusprofundi (strain ATCC 49239 / DSM 5036 / JCM 8891 / ACAM 34)).